A 218-amino-acid polypeptide reads, in one-letter code: Glutathione S-transferase Mu 4 (218 aa).

Positions 1–88 constitute a GST N-terminal domain; that stretch reads MPMTLGYWDI…YIARKHNLCG (88 aa). Residues 7 to 8, 46 to 50, 59 to 60, and 72 to 73 each bind glutathione; these read YW, WLSEK, NL, and QS. The region spanning 90–208 is the GST C-terminal domain; sequence TEEEKIRVDI…KTSRFLRTPL (119 aa). Tyr116 provides a ligand contact to substrate.

It belongs to the GST superfamily. Mu family. In terms of assembly, homodimer.

The protein localises to the cytoplasm. It catalyses the reaction RX + glutathione = an S-substituted glutathione + a halide anion + H(+). The catalysed reaction is 1-chloro-2,4-dinitrobenzene + glutathione = 2,4-dinitrophenyl-S-glutathione + chloride + H(+). It carries out the reaction (13S,14S)-epoxy-(4Z,7Z,9E,11E,16Z,19Z)-docosahexaenoate + glutathione = (13R)-S-glutathionyl-(14S)-hydroxy-(4Z,7Z,9E,11E,16Z,19Z)-docosahexaenoate. The enzyme catalyses leukotriene C4 = leukotriene A4 + glutathione. In terms of biological role, conjugation of reduced glutathione to a wide number of exogenous and endogenous hydrophobic electrophiles. Catalyzes the conjugation of leukotriene A4 with reduced glutathione (GSH) to form leukotriene C4. Can also catalyze the transfer of a glutathionyl group from glutathione (GSH) to 13(S),14(S)-epoxy-docosahexaenoic acid to form maresin conjugate in tissue regeneration 1 (MCTR1), a bioactive lipid mediator that possess potent anti-inflammatory and proresolving actions. The chain is Glutathione S-transferase Mu 4 (Gstm4) from Rattus norvegicus (Rat).